The following is a 340-amino-acid chain: Uroporphyrinogen decarboxylase (340 aa).

Substrate-binding positions include 21–25 (RQAGR), aspartate 71, tyrosine 148, serine 203, and histidine 316.

Belongs to the uroporphyrinogen decarboxylase family. Homodimer.

The protein resides in the cytoplasm. The catalysed reaction is uroporphyrinogen III + 4 H(+) = coproporphyrinogen III + 4 CO2. It functions in the pathway porphyrin-containing compound metabolism; protoporphyrin-IX biosynthesis; coproporphyrinogen-III from 5-aminolevulinate: step 4/4. Catalyzes the decarboxylation of four acetate groups of uroporphyrinogen-III to yield coproporphyrinogen-III. The sequence is that of Uroporphyrinogen decarboxylase from Campylobacter jejuni subsp. jejuni serotype O:6 (strain 81116 / NCTC 11828).